The following is a 216-amino-acid chain: Probable phosphatase SPAC513.02 (216 aa).

The active-site Tele-phosphohistidine intermediate is the H15.

Belongs to the phosphoglycerate mutase family. BPG-dependent PGAM subfamily.

The protein resides in the cytoplasm. It is found in the nucleus. This chain is Probable phosphatase SPAC513.02, found in Schizosaccharomyces pombe (strain 972 / ATCC 24843) (Fission yeast).